The chain runs to 394 residues: Elongation factor Tu 1 (394 aa).

The tr-type G domain maps to 9-204 (KPHCNIGTIG…AIDDYIPQPT (196 aa)). The segment at 18–25 (GHVDHGKT) is G1. GTP is bound at residue 18 to 25 (GHVDHGKT). Thr-25 lines the Mg(2+) pocket. Residues 61–65 (GITIQ) are G2. A G3 region spans residues 82–85 (DCPG). GTP is bound by residues 82–86 (DCPGH) and 137–140 (NKID). Positions 137 to 140 (NKID) are G4. A G5 region spans residues 174–176 (SAL).

Belongs to the TRAFAC class translation factor GTPase superfamily. Classic translation factor GTPase family. EF-Tu/EF-1A subfamily. As to quaternary structure, monomer.

It is found in the cytoplasm. It carries out the reaction GTP + H2O = GDP + phosphate + H(+). In terms of biological role, GTP hydrolase that promotes the GTP-dependent binding of aminoacyl-tRNA to the A-site of ribosomes during protein biosynthesis. The polypeptide is Elongation factor Tu 1 (Orientia tsutsugamushi (strain Boryong) (Rickettsia tsutsugamushi)).